The primary structure comprises 225 residues: MLFIFLTIAALGLSFWAQFKVKSNFEKYSKVEASSGRTGAETARRILDINGLYDVPVEPVRGTLTDHYDPTRRVVRLSEPVYYGRSISAISVASHEVGHALQHQESYGALVLRHKIFPVVNFASGVAPLLFLGGMLLGSLNLIGLGIILFSAAVFFQLITLPVEFNASSRAKQIIVSEGFIRNNEENGVNKVLSAAALTYVAAALVSLFELLRFVMIFLNGRDEN.

Position 95 (His95) interacts with Zn(2+). Residue Glu96 is part of the active site. Residues His99 and His103 each contribute to the Zn(2+) site. 3 helical membrane-spanning segments follow: residues 116-138 (IFPV…MLLG), 140-162 (LNLI…ITLP), and 192-212 (VLSA…FELL).

It localises to the cell membrane. This is Putative membrane protease YugP (yugP) from Bacillus subtilis (strain 168).